The primary structure comprises 1203 residues: Serine/threonine-protein kinase Nek1 (1203 aa).

Residues Tyr-4–Ile-258 enclose the Protein kinase domain. ATP-binding positions include Ile-10 to Ala-18 and Lys-33. The Proton acceptor role is filled by Asp-128. Thr-156 carries the post-translational modification Phosphothreonine. Thr-162 is modified (phosphothreonine; by autocatalysis). Positions Leu-329–Lys-357 are disordered. 2 positions are modified to phosphoserine: Ser-417 and Ser-437. Thr-615 carries the post-translational modification Phosphothreonine. Phosphoserine is present on Ser-618. Disordered regions lie at residues Leu-643–Arg-662 and Ala-674–Asp-708. Positions Ala-674 to His-683 are enriched in basic and acidic residues. A phosphoserine mark is found at Ser-750, Ser-786, Ser-820, and Ser-832. 2 disordered regions span residues Pro-814–Val-866 and Ala-888–Val-925. Residues Asn-839–Val-850 are compositionally biased toward acidic residues. Ser-997 is subject to Phosphoserine. Disordered regions lie at residues Ser-1021 to Glu-1045 and Arg-1063 to Ser-1120. Phosphoserine is present on Ser-1071.

This sequence belongs to the protein kinase superfamily. NEK Ser/Thr protein kinase family. NIMA subfamily. As to quaternary structure, binds to CBY2. Found in a complex with CFAP410, NEK1 and SPATA7. Interacts with CFAP410. Interacts (via Ser-997 phosphorylated form) with 14-3-3 proteins. The cofactor is Mg(2+). Predominantly in testes (germ cells and Sertoli cells). Lower levels in ovary (oocytes and granulosa cells), thymus and lung.

It localises to the nucleus. The protein localises to the cytoplasm. It is found in the cytoskeleton. Its subcellular location is the microtubule organizing center. The protein resides in the centrosome. The catalysed reaction is L-seryl-[protein] + ATP = O-phospho-L-seryl-[protein] + ADP + H(+). It carries out the reaction L-threonyl-[protein] + ATP = O-phospho-L-threonyl-[protein] + ADP + H(+). In terms of biological role, phosphorylates serines and threonines, but also appears to possess tyrosine kinase activity. Involved in DNA damage checkpoint control and for proper DNA damage repair. In response to injury that includes DNA damage, NEK1 phosphorylates VDAC1 to limit mitochondrial cell death. May be implicated in the control of meiosis. Involved in cilium assembly. This is Serine/threonine-protein kinase Nek1 (Nek1) from Mus musculus (Mouse).